Reading from the N-terminus, the 62-residue chain is Delta-theraphotoxin-Cg1a 1 (62 aa).

Positions 1 to 21 (MKTSILFVIFSLALLFALSAA) are cleaved as a signal peptide. The propeptide occupies 22-29 (TEIEETDR). Intrachain disulfides connect Cys-31-Cys-46, Cys-38-Cys-51, and Cys-45-Cys-58.

It belongs to the neurotoxin 10 (Hwtx-1) family. 33 (Jztx-1) subfamily. As to expression, expressed by the venom gland.

It is found in the secreted. Inhibits voltage-gated sodium channels, preferentially subtype Nav1.5/SCN5A (in cardiac myocytes), but also Nav1.6/SCN8A and Nav1.7/SCN9A (TTX-sensitive Nav in rat DRG neurons) and invertebrate Nav (in insect neurons) as well as voltage-gated potassium channels of the subtype Kv2.1/KCNB1. Is suggested to bind to site 3 of the sodium channels and inhibit the inactivation of the activated channels, thereby blocking neuronal transmission. On potassium channels, inhibits activation of channels with an IC(50) of 8.05 uM through a voltage sensor-trapping mechanism. Increases muscle contraction in several assays (mouse phrenic nerve-diaphragm, toad heart, rat vas deferens) and is suggested to act both presynaptically and postsynaptically. Functionally, moderately inhibits voltage-gated sodium channels and weakly inhibits voltage-gated potassium channel. Inhibits the inactivation of rat Nav1.2/SCN2A (IC(50)=870 nM), rat Nav1.3/SCN3A (IC(50)=845 nM), rat Nav1.4/SCN4A (IC(50)=339 nM), human Nav1.5/SCN5A (IC(50)=335 nM) and human Nav1.7/SCN9A sodium channels (IC(50)=348 nM). The toxin delays the inactivation of sodium channels without affecting the activation and steady-state inactivation kinetics in the physiological range of voltages. Site-directed mutagenesis of the sodium channel indicates that the toxin interacts with site 3 located at the extracellular S3-S4 linker of domain IV. On potassium channels, it inhibits activation of channels with an IC(50) of 8.05 uM through a voltage sensor-trapping mechanism. It increases muscle contraction in several assays (mouse phrenic nerve-diaphragm, toad heart, rat vas deferens) and is suggested to act both presynaptically and postsynaptically. The protein is Delta-theraphotoxin-Cg1a 1 of Chilobrachys guangxiensis (Chinese earth tiger tarantula).